The sequence spans 552 residues: Urocanate hydratase (552 aa).

Residues 50–51 (GG), Gln128, 174–176 (GMG), Glu194, Arg199, 261–265 (QTSAH), 271–272 (YI), and Tyr320 each bind NAD(+). The active site involves Cys408. Position 490 (Gly490) interacts with NAD(+).

Belongs to the urocanase family. Requires NAD(+) as cofactor.

Its subcellular location is the cytoplasm. The catalysed reaction is 4-imidazolone-5-propanoate = trans-urocanate + H2O. Its pathway is amino-acid degradation; L-histidine degradation into L-glutamate; N-formimidoyl-L-glutamate from L-histidine: step 2/3. Functionally, catalyzes the conversion of urocanate to 4-imidazolone-5-propionate. This Bdellovibrio bacteriovorus (strain ATCC 15356 / DSM 50701 / NCIMB 9529 / HD100) protein is Urocanate hydratase.